The sequence spans 869 residues: MLEAYRKHVEERAAQGVVPQPLNAEQTAGLVELLKNPPAGEEEFLLDLITNRVPPGVDEAAYVKAGFLSAIVKGEATSPLIDKQRAAELLGTMQGGYNIATLVELLDDAELANTAAEQLKHTLLMFDAFHDVAERAKKGNAAAKSVLQSWADGEWFKAKPEVPEKLTLTVFKVPGETNTDDLSPAPDAWSRPDIPLHALAMLKMARDGIEPVQPGSVGPLKQIEAVKAKGFPVAYVGDVVGTGSSRKSATNSVLWFFGDDIPFVPNKRAGGFCFGTKIAPIFYNTMEDAGALPIEFDCTNLAMGDVIDVYPYEGKVVRHDSGEVVTTFELKTPVLLDEVRAGGRIPLIVGRGLTEKARAELGLGASDLFRKPEAPADSGKGFTLAQKMVGRACGLPEGQGVRPGTYCEPKMTTVGSQDTTGPMTRDELKDLACLGFSADLVMQSFCHTAAYPKPIDVKTHHTLPDFIMTRGGVSLRPGDGIIHSWLNRMLLPDTVGTGGDSHTRFPIGISFPAGSGLVAFAAATGVMPLDMPESVLVRFKGKLQPGITLRDLVHAIPYYAIQQGLLTVEKKGKKNIFSGRILEIEGLNDLTVEQAFELSDASAERSAAGCTIKLPEQAIAEYLKSNITLLRWMIGEGYGDPRTLERRAQAMEAWLAKPELLEADKDAEYAAVIEIDLADVKEPVLCAPNDPDDARLLSSVQGRKIDEVFIGSCMTNIGHFRAAGKLLDKVKGGIPTRLWLAPPTKMDAHQLTEEGYYGIYGKAGARMEMPGCSLCMGNQARVQTGSTVVSTSTRNFPNRLGDATDVFLASAELAAVSSILGKLPTVEEYMAYAKDIDSMAADVYRYLSFDQIAEFREAAANAKIPVVQA.

Residues arginine 191, 244-246, 417-419, and serine 501 contribute to the substrate site; these read SSR and QDT. Cysteine 713, cysteine 772, and cysteine 775 together coordinate [4Fe-4S] cluster. 2 residues coordinate substrate: arginine 794 and arginine 799.

It belongs to the aconitase/IPM isomerase family. In terms of assembly, monomer. It depends on [4Fe-4S] cluster as a cofactor.

The catalysed reaction is citrate = D-threo-isocitrate. It catalyses the reaction (2S,3R)-3-hydroxybutane-1,2,3-tricarboxylate = 2-methyl-cis-aconitate + H2O. The protein operates within carbohydrate metabolism; tricarboxylic acid cycle; isocitrate from oxaloacetate: step 2/2. It functions in the pathway organic acid metabolism; propanoate degradation. Its function is as follows. Involved in the catabolism of short chain fatty acids (SCFA) via the tricarboxylic acid (TCA)(acetyl degradation route) and probably via the 2-methylcitrate cycle I (propionate degradation route). Catalyzes the reversible isomerization of citrate to isocitrate via cis-aconitate. Catalyzes the hydration of 2-methyl-cis-aconitate to yield (2R,3S)-2-methylisocitrate. The apo form of AcnB functions as a RNA-binding regulatory protein. This is Aconitate hydratase B (acnB) from Pseudomonas aeruginosa (strain ATCC 15692 / DSM 22644 / CIP 104116 / JCM 14847 / LMG 12228 / 1C / PRS 101 / PAO1).